We begin with the raw amino-acid sequence, 184 residues long: Photosystem I assembly protein Ycf4 (184 aa).

A run of 2 helical transmembrane segments spans residues 21–43 (NFCW…ISSY) and 58–80 (LFFP…SSYL).

The protein belongs to the Ycf4 family.

It is found in the plastid. The protein resides in the chloroplast thylakoid membrane. Its function is as follows. Seems to be required for the assembly of the photosystem I complex. In Carpobrotus chilensis (Sea fig), this protein is Photosystem I assembly protein Ycf4.